Here is a 195-residue protein sequence, read N- to C-terminus: uncharacterized protein (195 aa).

Positions 1–21 (MHFSSCVLVSALAIVTNVATA) are cleaved as a signal peptide. Asn-62 and Asn-109 each carry an N-linked (GlcNAc...) asparagine glycan. Residues 119-141 (DWDEDTVTGENAPDSGEPFSTSH) form a disordered region.

It is found in the secreted. This is an uncharacterized protein from Arthroderma benhamiae (strain ATCC MYA-4681 / CBS 112371) (Trichophyton mentagrophytes).